The chain runs to 352 residues: C-C chemokine receptor type 5 (352 aa).

Residues 1-30 (MDYQVSSPTYDIDYNTSEPCQKINVKQIAA) are Extracellular-facing. Position 3 is a sulfotyrosine (tyrosine 3). Residues serine 6 and serine 7 are each glycosylated (O-linked (GalNAc...) serine). 2 positions are modified to sulfotyrosine: tyrosine 10 and tyrosine 14. Cystine bridges form between cysteine 20–cysteine 269 and cysteine 101–cysteine 178. The chain crosses the membrane as a helical span at residues 31-58 (RLLPLLYSLVFIFGFVGNILVVLILINC). Residues 59-68 (KRLKSMTDIY) lie on the Cytoplasmic side of the membrane. A helical membrane pass occupies residues 69 to 89 (LLNLAISDLLFLLTVPFWAHY). At 90–102 (AAAQWDFGNTMCQ) the chain is on the extracellular side. A helical membrane pass occupies residues 103–124 (LLTGLYFIGFFSGIFFIILLTI). Topologically, residues 125-141 (DRYLAIVHAVFALKART) are cytoplasmic. The helical transmembrane segment at 142-166 (VTFGVVTSVITWVVAVFASLPRIIF) threads the bilayer. At 167–198 (TRSQREGLHYTCSSHFPYSQYQFWKNFQTLKI) the chain is on the extracellular side. The chain crosses the membrane as a helical span at residues 199-218 (VILGLVLPLLVMVICYSGIL). Topologically, residues 219-235 (KTLLRCRNEKKRHRAVR) are cytoplasmic. A helical transmembrane segment spans residues 236-260 (LIFTIMIVYFLFWAPYNIVLLLNTF). At 261–277 (QEFFGLNNCSSSNRLDQ) the chain is on the extracellular side. The chain crosses the membrane as a helical span at residues 278 to 301 (AMQVTETLGMTHCCINPIIYAFVG). At 302-352 (EKFRNYLLVFFQKHIAKRFCKCCSIFQQEAPERASSVYTRSTGEQEISVGL) the chain is on the cytoplasmic side. 3 S-palmitoyl cysteine lipidation sites follow: cysteine 321, cysteine 323, and cysteine 324. 4 positions are modified to phosphoserine; by BARK1: serine 336, serine 337, serine 342, and serine 349.

It belongs to the G-protein coupled receptor 1 family. Interacts with PRAF2. Efficient ligand binding to CCL3/MIP-1alpha and CCL4/MIP-1beta requires sulfation, O-glycosylation and sialic acid modifications. Glycosylation on Ser-6 is required for efficient binding of CCL4. Interacts with GRK2. Interacts with ARRB1 and ARRB2. Interacts with CNIH4. Interacts with S100A4; this interaction stimulates T-lymphocyte chemotaxis. Post-translationally, sulfated on at least 2 of the N-terminal tyrosines. Sulfation is required for efficient binding of the chemokines, CCL3 and CCL4. Palmitoylation in the C-terminal is important for cell surface expression. In terms of processing, phosphorylation on serine residues in the C-terminal is stimulated by binding CC chemokines especially by APO-RANTES. Post-translationally, O-glycosylated, but not N-glycosylated. Ser-6 appears to be the major site even if Ser-7 may be also O-glycosylated. Also sialylated glycans present which contribute to chemokine binding. Thr-16 and Ser-17 may also be glycosylated and, if so, with small moieties such as a T-antigen.

The protein localises to the cell membrane. Functionally, receptor for a number of inflammatory CC-chemokines including CCL3/MIP-1-alpha, CCL4/MIP-1-beta and RANTES and subsequently transduces a signal by increasing the intracellular calcium ion level. May play a role in the control of granulocytic lineage proliferation or differentiation. Participates in T-lymphocyte migration to the infection site by acting as a chemotactic receptor. In Cercopithecus cephus (Moustached monkey), this protein is C-C chemokine receptor type 5 (CCR5).